The primary structure comprises 216 residues: Peptide methionine sulfoxide reductase MsrA (216 aa).

C54 is an active-site residue.

Belongs to the MsrA Met sulfoxide reductase family.

It catalyses the reaction L-methionyl-[protein] + [thioredoxin]-disulfide + H2O = L-methionyl-(S)-S-oxide-[protein] + [thioredoxin]-dithiol. The enzyme catalyses [thioredoxin]-disulfide + L-methionine + H2O = L-methionine (S)-S-oxide + [thioredoxin]-dithiol. Has an important function as a repair enzyme for proteins that have been inactivated by oxidation. Catalyzes the reversible oxidation-reduction of methionine sulfoxide in proteins to methionine. This chain is Peptide methionine sulfoxide reductase MsrA, found in Xanthomonas campestris pv. campestris (strain 8004).